The primary structure comprises 548 residues: Esterase-5A (548 aa).

An N-terminal signal peptide occupies residues 1–21 (MHLVRWLICLIQLWVQLGAAG). Cys-87 and Cys-106 are oxidised to a cystine. 2 N-linked (GlcNAc...) asparagine glycosylation sites follow: Asn-95 and Asn-116. Ser-210 acts as the Acyl-ester intermediate in catalysis. A disulfide bridge connects residues Cys-262 and Cys-274. N-linked (GlcNAc...) asparagine glycosylation is present at Asn-479. Cys-518 and Cys-539 are oxidised to a cystine.

Belongs to the type-B carboxylesterase/lipase family.

The protein localises to the secreted. The enzyme catalyses a carboxylic ester + H2O = an alcohol + a carboxylate + H(+). This chain is Esterase-5A (Est-5A), found in Drosophila pseudoobscura pseudoobscura (Fruit fly).